Here is a 217-residue protein sequence, read N- to C-terminus: uncharacterized protein (217 aa).

The region spanning 98–203 is the PilZ domain; the sequence is QRRQYVRTDA…GDQQALLQYC (106 aa).

This is an uncharacterized protein from Bacillus subtilis (strain 168).